The primary structure comprises 198 residues: Dephospho-CoA kinase (198 aa).

Residues 2–90 form the DPCK domain; it reads LIAIVGKPGV…KLSLVTKPLL (89 aa). 10 to 15 is an ATP binding site; the sequence is GVGKTS.

This sequence belongs to the CoaE family.

Its subcellular location is the cytoplasm. The enzyme catalyses 3'-dephospho-CoA + ATP = ADP + CoA + H(+). The protein operates within cofactor biosynthesis; coenzyme A biosynthesis; CoA from (R)-pantothenate: step 5/5. Its function is as follows. Catalyzes the phosphorylation of the 3'-hydroxyl group of dephosphocoenzyme A to form coenzyme A. This chain is Dephospho-CoA kinase, found in Mycoplasma genitalium (strain ATCC 33530 / DSM 19775 / NCTC 10195 / G37) (Mycoplasmoides genitalium).